The following is a 42-amino-acid chain: Aspartate-semialdehyde dehydrogenase leader peptide (42 aa).

This is Aspartate-semialdehyde dehydrogenase leader peptide from Streptococcus mutans serotype c (strain ATCC 700610 / UA159).